A 103-amino-acid polypeptide reads, in one-letter code: SOSS complex subunit C (103 aa).

It belongs to the SOSS-C family. As to quaternary structure, belongs to the multiprotein complex Integrator. Component of the SOSS complex, composed of soss-b (soss-b1/nabp2 or soss-b2/nabp1), soss-a/ints3 and soss-c/inip.

It localises to the nucleus. Functionally, component of the SOSS complex, a multiprotein complex that functions downstream of the MRN complex to promote DNA repair and G2/M checkpoint. The SOSS complex associates with single-stranded DNA at DNA lesions and influences diverse endpoints in the cellular DNA damage response including cell-cycle checkpoint activation, recombinational repair and maintenance of genomic stability. Required for efficient homologous recombination-dependent repair of double-strand breaks (DSBs). This is SOSS complex subunit C (inip) from Danio rerio (Zebrafish).